Reading from the N-terminus, the 216-residue chain is Thymidylate kinase (216 aa).

Residue 10–17 participates in ATP binding; the sequence is GPDGAGKS.

Belongs to the thymidylate kinase family.

The catalysed reaction is dTMP + ATP = dTDP + ADP. In terms of biological role, phosphorylation of dTMP to form dTDP in both de novo and salvage pathways of dTTP synthesis. The protein is Thymidylate kinase of Lactobacillus acidophilus (strain ATCC 700396 / NCK56 / N2 / NCFM).